A 506-amino-acid chain; its full sequence is Epstein-Barr nuclear antigen leader protein (506 aa).

Disordered regions lie at residues 1-470 and 485-506; these read MGDR…PRPP and FEPP…EDED. Serine 35 carries the post-translational modification Phosphoserine; by host.

It belongs to the lymphocryptovirus EBNA-LP family. In terms of assembly, homooligomer. Interacts with host SP100; this interaction is important for EBNA-LP coactivator activity. Interacts with host HAX1, ERR1 and HSPA2. Interacts with host PRKDC and AKAP8L; these interactions modulate the coactivator function of EBNA-LP. Post-translationally, phosphorylated by the cellular protein kinase cdc2.

Its subcellular location is the host nucleus. Its function is as follows. Plays an important role in the establishment of B-cell immortalization by acting as an EBNA2 coactivator. This transcriptional activation preferentially enhances the expression of the major viral protein LMP1. The interaction between EBNA-LP and host SP100 correlates with coactivation of EBNA2 and the relocalization of SP100 from PML nuclear bodies into nucleoplasm. The polypeptide is Epstein-Barr nuclear antigen leader protein (EBNA-LP) (Epstein-Barr virus (strain B95-8) (HHV-4)).